Reading from the N-terminus, the 272-residue chain is Putative protein-disulfide oxidoreductase RP025 (272 aa).

The N-terminal stretch at 1-21 is a signal peptide; that stretch reads MRNIFIVLIFLFLSNCSEVKA. One can recognise a Thioredoxin domain in the interval 74–263; it reads DSREQKKPEI…ISKAVDKALD (190 aa). An intrachain disulfide couples Cys-116 to Cys-119.

It belongs to the thioredoxin family. DsbA subfamily.

It localises to the periplasm. In terms of biological role, may be required for disulfide bond formation in some proteins. This Rickettsia prowazekii (strain Madrid E) protein is Putative protein-disulfide oxidoreductase RP025.